The chain runs to 312 residues: Cytochrome f (312 aa).

Positions 1-28 (MQISKFFKFVFISVSLCGSLLFPQMANA) are cleaved as a signal peptide. Heme is bound by residues Tyr29, Cys49, Cys52, and His53. The chain crosses the membrane as a helical span at residues 278 to 298 (VKGMIAFFFTVTVAQILLVLK).

It belongs to the cytochrome f family. The 4 large subunits of the cytochrome b6-f complex are cytochrome b6, subunit IV (17 kDa polypeptide, petD), cytochrome f and the Rieske protein, while the 4 small subunits are PetG, PetL, PetM and PetN. The complex functions as a dimer. The cofactor is heme.

It localises to the plastid. Its subcellular location is the chloroplast thylakoid membrane. Functionally, component of the cytochrome b6-f complex, which mediates electron transfer between photosystem II (PSII) and photosystem I (PSI), cyclic electron flow around PSI, and state transitions. The sequence is that of Cytochrome f from Emiliania huxleyi (Coccolithophore).